Here is a 129-residue protein sequence, read N- to C-terminus: uncharacterized protein (129 aa).

An N-terminal signal peptide occupies residues 1–17 (MCPECFFLMLFFCGYRA). Residues 26–36 (SSSSSSSFRSS) show a composition bias toward low complexity. The segment at 26 to 76 (SSSSSSSFRSSPAYGFSGRPPGGAGCRERSQRSCLRPGGLPSLTRNPGLQR) is disordered.

This is an uncharacterized protein from Escherichia coli O157:H7.